We begin with the raw amino-acid sequence, 144 residues long: Leghemoglobin-1 (144 aa).

The Globin domain occupies 2-144 (GFTEKQEALV…DGLATAIKAA (143 aa)). A nitrated tyrosine mark is found at tyrosine 25 and tyrosine 30. Serine 45 lines the heme b pocket. Serine 45 carries the post-translational modification Phosphoserine. Histidine 62 lines the O2 pocket. Residues lysine 65, histidine 93, and lysine 96 each coordinate heme b. A Nitrated tyrosine modification is found at tyrosine 134.

Belongs to the plant globin family. In terms of assembly, monomer. Post-translationally, nitrated in effective nodules and particularly in hypoxic conditions; this mechanism may play a protective role in the symbiosis by buffering toxic peroxynitrite NO(2)(-). Nitration level decrease during nodule senescence. Phosphorylation at Ser-45 disrupts the molecular environment of its porphyrin ring oxygen binding pocket, thus leading to a reduced oxygen consumption and to the delivery of oxygen O(2) to symbiosomes. Root nodules.

The protein resides in the cytoplasm. It is found in the cytosol. Its subcellular location is the nucleus. In terms of biological role, leghemoglobin that reversibly binds oxygen O(2) through a pentacoordinated heme iron. In root nodules, facilitates the diffusion of oxygen to the bacteroids while preventing the bacterial nitrogenase from being inactivated by buffering dioxygen, nitric oxide and carbon monoxide, and promoting the formation of reactive oxygen species (ROS, e.g. H(2)O(2)). This role is essential for symbiotic nitrogen fixation (SNF). This Vicia faba (Broad bean) protein is Leghemoglobin-1.